A 339-amino-acid polypeptide reads, in one-letter code: Heat-inducible transcription repressor HrcA (339 aa).

This sequence belongs to the HrcA family.

Its function is as follows. Negative regulator of class I heat shock genes (grpE-dnaK-dnaJ and groELS operons). Prevents heat-shock induction of these operons. This is Heat-inducible transcription repressor HrcA from Acidothermus cellulolyticus (strain ATCC 43068 / DSM 8971 / 11B).